The sequence spans 688 residues: Protein sel-1 homolog 2 (688 aa).

The signal sequence occupies residues 1–18 (MNPLALLVEILIIIEVTT). At 19–662 (KNSEAERYNR…KWKWLKLDST (644 aa)) the chain is on the extracellular side. N-linked (GlcNAc...) asparagine glycosylation occurs at N34. Sel1-like repeat units lie at residues 107 to 142 (GDEL…DMGN), 143 to 178 (LKAM…KEGS), 179 to 214 (YKAQ…AGGS), 215 to 250 (MMSQ…DYIA), 297 to 333 (VQIQ…KAGS), 334 to 370 (ANAM…SKGN), 371 to 406 (AIGL…EKGW), 407 to 442 (PNAQ…QSGQ), 443 to 478 (PLAI…ELGH), 551 to 586 (AFAR…DKHH), and 588 to 623 (AQAM…QTSP). N-linked (GlcNAc...) asparagine glycosylation is present at N162. Residues 663–683 (IGPYWDLLVIGLIVVVLIFLL) form a helical membrane-spanning segment. Residues 684 to 688 (RNHHR) lie on the Cytoplasmic side of the membrane.

Belongs to the sel-1 family.

The protein localises to the membrane. Its subcellular location is the cell projection. It is found in the cilium. It localises to the nucleus speckle. The protein is Protein sel-1 homolog 2 (Sel1l2) of Rattus norvegicus (Rat).